We begin with the raw amino-acid sequence, 348 residues long: NADH-ubiquinone oxidoreductase chain 2 (348 aa).

A run of 10 helical transmembrane segments spans residues 3–23, 24–44, 60–80, 95–115, 136–156, 177–197, 198–218, 239–259, 273–293, and 325–345; these read PFIL…TFAS, SHWL…IPLM, FITQ…NAWI, ASML…HFWL, LAPF…ITFL, ILAY…QFNQ, QLAL…FMIF, LTAI…LSGF, DIPL…YFYL, and LAIS…TLAL.

It belongs to the complex I subunit 2 family.

Its subcellular location is the mitochondrion inner membrane. It catalyses the reaction a ubiquinone + NADH + 5 H(+)(in) = a ubiquinol + NAD(+) + 4 H(+)(out). Core subunit of the mitochondrial membrane respiratory chain NADH dehydrogenase (Complex I) that is believed to belong to the minimal assembly required for catalysis. Complex I functions in the transfer of electrons from NADH to the respiratory chain. The immediate electron acceptor for the enzyme is believed to be ubiquinone. In Gadus morhua (Atlantic cod), this protein is NADH-ubiquinone oxidoreductase chain 2 (MT-ND2).